The sequence spans 297 residues: TATA-box-binding protein (297 aa).

Positions 52–116 (EEQQRQQQQA…ITPATPASES (65 aa)) are disordered. 2 stretches are compositionally biased toward low complexity: residues 56–78 (RQQQ…QTPQ) and 104–114 (MTPITPATPAS). Repeat copies occupy residues 123–199 (LQNI…ARVV) and 213–290 (IQNM…YPIL).

Belongs to the TBP family. As to quaternary structure, belongs to the TFIID complex together with the TBP-associated factors (TAFs). Binds DNA as monomer. Post-translationally, the N-terminal domain is extensively phosphorylated.

The protein localises to the nucleus. Its function is as follows. General transcription factor that functions at the core of the DNA-binding multiprotein factor TFIID. Binding of TFIID to the TATA box is the initial transcriptional step of the pre-initiation complex (PIC), playing a role in the activation of eukaryotic genes transcribed by RNA polymerase II. Members of the TBP family are differentially required to regulate transcription and development during early embryogenesis. Binds to the promoters of select genes. This Xenopus tropicalis (Western clawed frog) protein is TATA-box-binding protein.